The primary structure comprises 472 residues: Methylenetetrahydrofolate--tRNA-(uracil-5-)-methyltransferase TrmFO (472 aa).

15-20 (GGGLAG) lines the FAD pocket.

Belongs to the MnmG family. TrmFO subfamily. FAD is required as a cofactor.

The protein resides in the cytoplasm. It carries out the reaction uridine(54) in tRNA + (6R)-5,10-methylene-5,6,7,8-tetrahydrofolate + NADH + H(+) = 5-methyluridine(54) in tRNA + (6S)-5,6,7,8-tetrahydrofolate + NAD(+). The enzyme catalyses uridine(54) in tRNA + (6R)-5,10-methylene-5,6,7,8-tetrahydrofolate + NADPH + H(+) = 5-methyluridine(54) in tRNA + (6S)-5,6,7,8-tetrahydrofolate + NADP(+). In terms of biological role, catalyzes the folate-dependent formation of 5-methyl-uridine at position 54 (M-5-U54) in all tRNAs. The sequence is that of Methylenetetrahydrofolate--tRNA-(uracil-5-)-methyltransferase TrmFO from Rhizobium meliloti (strain 1021) (Ensifer meliloti).